The chain runs to 364 residues: MGAYILRRLALMIPTIVGIMGISFLVIQFAPGGPVEQVVAQLTGQGDSASDRLSGGGDLMGQSGGFDESGSKYRGAQGLDPELIKKLEKQFGFDKPPLTRFLEMMWNYIRFDFGDSFFRNSSVIDLIIDKLPVSASLGFWILIISYVISIPLGIKKAVSDGSTFDVWTSGIIIIGYAVPSFLFGILLIVLFAGGSFFDWFPLRGLVSDNFDQLNWWQKIIDYFWHLTLPLIALSLSAFATTTLLTKNSFIDEIKKQYVVTARAKGLSERKVLYGHVFRNAMLIVIAGFPGAFISAFFTGSLLIENIFSLDGLGRLGYLSVVNRDYPIVFGTLFIFSLMGLVVGLLSDLIYTWIDPRIDFERRDV.

The next 6 helical transmembrane spans lie at 9 to 29 (LALMIPTIVGIMGISFLVIQF), 134 to 154 (SASLGFWILIISYVISIPLGI), 171 to 191 (IIIIGYAVPSFLFGILLIVLF), 219 to 239 (IIDYFWHLTLPLIALSLSAFA), 283 to 303 (IVIAGFPGAFISAFFTGSLLI), and 325 to 345 (YPIVFGTLFIFSLMGLVVGLL). Residues 131–350 (LPVSASLGFW…VVGLLSDLIY (220 aa)) form the ABC transmembrane type-1 domain.

The protein belongs to the binding-protein-dependent transport system permease family. The complex is composed of one ATP-binding protein (YejF), two transmembrane proteins (YejB and YejE) and a solute-binding protein (YepA or YejA).

The protein localises to the cell inner membrane. Its function is as follows. Part of the ABC transporter complex YejBEF-YepA involved in the uptake of muropeptides, the breakdown products of cell wall peptidoglycan. The import of muropeptides into the cell enables peptidoglycan recycling, which is vital for cell wall integrity in this bacterium. Is also probably part of the ABC transporter complex YejABEF, which is likely involved in broad-spectrum peptide import. Responsible for the translocation of the substrate across the membrane. The chain is Peptidoglycan transport system permease protein YejB from Agrobacterium fabrum (strain C58 / ATCC 33970) (Agrobacterium tumefaciens (strain C58)).